The sequence spans 91 residues: MSGVGEKASGTTKTPADFLKSIRGKPVVVKLNSGVDYRGILTCLDGYMNIAMEQTEEYVNGQLKNTYGDAFVRGNNVLYISTTKGTLSDGA.

The region spanning 14–86 (TPADFLKSIR…VLYISTTKGT (73 aa)) is the Sm domain.

The protein belongs to the snRNP Sm proteins family. Component of the heptameric LSM1-LSM7 complex that forms a seven-membered ring structure with a donut shape. The LSM subunits are arranged in the order LSM1, LSM2, LSM3, LSM6, LSM5, LSM7 and LSM4. Component of the heptameric LSM2-LSM8 complex that forms a seven-membered ring structure with a donut shape. The LSM subunits are arranged in the order LSM8, LSM2, LSM3, LSM6, LSM5, LSM7 and LSM4. LSM6B subunit interacts only with its two neighboring subunits, LSM3A or LSM3B and LSM5. As to expression, expressed in roots, leaves, stems, flowers and siliques.

Its subcellular location is the cytoplasm. The protein resides in the nucleus. Component of LSM protein complexes, which are involved in RNA processing. Component of the cytoplasmic LSM1-LSM7 complex which is involved in mRNA degradation by promoting decapping and leading to accurate 5'-3' mRNA decay. The cytoplasmic LSM1-LSM7 complex regulates developmental gene expression by the decapping of specific development-related transcripts. Component of the nuclear LSM2-LSM8 complex which is involved splicing nuclear mRNAs. LSM2-LSM8 binds directly to the U6 small nuclear RNAs (snRNAs) and is essential for accurate splicing of selected development-related mRNAs through the stabilization of the spliceosomal U6 snRNA. Plays a critical role in the regulation of development-related gene expression. The sequence is that of Sm-like protein LSM36B from Arabidopsis thaliana (Mouse-ear cress).